Consider the following 245-residue polypeptide: Eukaryotic translation initiation factor 6 (245 aa).

Belongs to the eIF-6 family. In terms of assembly, monomer. Associates with the 60S ribosomal subunit.

Its subcellular location is the cytoplasm. It localises to the nucleus. It is found in the nucleolus. Binds to the 60S ribosomal subunit and prevents its association with the 40S ribosomal subunit to form the 80S initiation complex in the cytoplasm. May also be involved in ribosome biogenesis. The chain is Eukaryotic translation initiation factor 6 from Drosophila melanogaster (Fruit fly).